A 341-amino-acid chain; its full sequence is 4-hydroxy-2-oxovalerate aldolase (341 aa).

Residues 9 to 260 (VVITDSTLRD…ATGIDLYRVL (252 aa)) enclose the Pyruvate carboxyltransferase domain. 17–18 (RD) lines the substrate pocket. Aspartate 18 contributes to the Mn(2+) binding site. The active-site Proton acceptor is histidine 21. Positions 172 and 199 each coordinate substrate. Residues histidine 199 and histidine 201 each coordinate Mn(2+).

This sequence belongs to the 4-hydroxy-2-oxovalerate aldolase family.

It carries out the reaction (S)-4-hydroxy-2-oxopentanoate = acetaldehyde + pyruvate. The polypeptide is 4-hydroxy-2-oxovalerate aldolase (Spirochaeta aurantia).